A 246-amino-acid chain; its full sequence is TVP38/TMEM64 family membrane protein MT0653 (246 aa).

Transmembrane regions (helical) follow at residues 19–39 (LVVFAGFLVGMFYLVAATDVI), 57–77 (LTYVVVSAVLGALFVPGPILA), 83–103 (LFGPLVGVFVTLGATVGTAVV), 157–177 (AFGTFGVPLWQMAVGAFIGSA), and 196–216 (LLASCAIAVWCVTAIIGAFAA).

Belongs to the TVP38/TMEM64 family.

It is found in the cell membrane. This is TVP38/TMEM64 family membrane protein MT0653 from Mycobacterium tuberculosis (strain CDC 1551 / Oshkosh).